A 356-amino-acid chain; its full sequence is Probable dual-specificity RNA methyltransferase RlmN (356 aa).

Glu97 functions as the Proton acceptor in the catalytic mechanism. The region spanning Tyr103–Asp333 is the Radical SAM core domain. Cysteines 110 and 338 form a disulfide. [4Fe-4S] cluster contacts are provided by Cys117, Cys121, and Cys124. S-adenosyl-L-methionine-binding positions include Gly164 to Glu165, Ser196, Ser219 to His221, and Asn295. The S-methylcysteine intermediate role is filled by Cys338.

This sequence belongs to the radical SAM superfamily. RlmN family. [4Fe-4S] cluster serves as cofactor.

It localises to the cytoplasm. It catalyses the reaction adenosine(2503) in 23S rRNA + 2 reduced [2Fe-2S]-[ferredoxin] + 2 S-adenosyl-L-methionine = 2-methyladenosine(2503) in 23S rRNA + 5'-deoxyadenosine + L-methionine + 2 oxidized [2Fe-2S]-[ferredoxin] + S-adenosyl-L-homocysteine. It carries out the reaction adenosine(37) in tRNA + 2 reduced [2Fe-2S]-[ferredoxin] + 2 S-adenosyl-L-methionine = 2-methyladenosine(37) in tRNA + 5'-deoxyadenosine + L-methionine + 2 oxidized [2Fe-2S]-[ferredoxin] + S-adenosyl-L-homocysteine. Specifically methylates position 2 of adenine 2503 in 23S rRNA and position 2 of adenine 37 in tRNAs. The sequence is that of Probable dual-specificity RNA methyltransferase RlmN from Lachnoclostridium phytofermentans (strain ATCC 700394 / DSM 18823 / ISDg) (Clostridium phytofermentans).